The primary structure comprises 89 residues: Large ribosomal subunit protein bL28 (89 aa).

It belongs to the bacterial ribosomal protein bL28 family.

The chain is Large ribosomal subunit protein bL28 from Chlamydia pneumoniae (Chlamydophila pneumoniae).